A 285-amino-acid chain; its full sequence is Energy-coupling factor transporter ATP-binding protein EcfA2 (285 aa).

The 237-residue stretch at 6 to 242 (LKVEELNYNY…KEVIRKVNLR (237 aa)) folds into the ABC transporter domain. ATP is bound at residue 39–46 (GGNGVGKS).

It belongs to the ABC transporter superfamily. Energy-coupling factor EcfA family. Forms a stable energy-coupling factor (ECF) transporter complex composed of 2 membrane-embedded substrate-binding proteins (S component), 2 ATP-binding proteins (A component) and 2 transmembrane proteins (T component).

The protein resides in the cell membrane. ATP-binding (A) component of a common energy-coupling factor (ECF) ABC-transporter complex. Unlike classic ABC transporters this ECF transporter provides the energy necessary to transport a number of different substrates. The chain is Energy-coupling factor transporter ATP-binding protein EcfA2 from Clostridium perfringens (strain SM101 / Type A).